The sequence spans 348 residues: Erythronate-4-phosphate dehydrogenase (348 aa).

Threonine 46 and threonine 67 together coordinate substrate. Aspartate 147 provides a ligand contact to NAD(+). Arginine 209 is a catalytic residue. Residue aspartate 233 coordinates NAD(+). The active site involves glutamate 238. The active-site Proton donor is the histidine 255. Glycine 258 is an NAD(+) binding site. Tyrosine 259 contributes to the substrate binding site.

It belongs to the D-isomer specific 2-hydroxyacid dehydrogenase family. PdxB subfamily. Homodimer.

The protein localises to the cytoplasm. It catalyses the reaction 4-phospho-D-erythronate + NAD(+) = (R)-3-hydroxy-2-oxo-4-phosphooxybutanoate + NADH + H(+). Its pathway is cofactor biosynthesis; pyridoxine 5'-phosphate biosynthesis; pyridoxine 5'-phosphate from D-erythrose 4-phosphate: step 2/5. Catalyzes the oxidation of erythronate-4-phosphate to 3-hydroxy-2-oxo-4-phosphonooxybutanoate. This is Erythronate-4-phosphate dehydrogenase from Bacteroides fragilis (strain YCH46).